A 317-amino-acid chain; its full sequence is Metaxin-1 (317 aa).

Glycyl lysine isopeptide (Lys-Gly) (interchain with G-Cter in ubiquitin) cross-links involve residues Lys38, Lys41, Lys78, and Lys168. A helical membrane pass occupies residues 272 to 292 (ILSVLAGLAAMVGYALLSGIV).

It belongs to the metaxin family. As to quaternary structure, interacts with MTX2/metaxin-2. Associates with the mitochondrial contact site and cristae organizing system (MICOS) complex, composed of at least MICOS10/MIC10, CHCHD3/MIC19, CHCHD6/MIC25, APOOL/MIC27, IMMT/MIC60, APOO/MIC23/MIC26 and QIL1/MIC13. This complex was also known under the names MINOS or MitOS complex. The MICOS complex associates with mitochondrial outer membrane proteins SAMM50, MTX1 and MTX2 (together described as components of the mitochondrial outer membrane sorting assembly machinery (SAM) complex) and DNAJC11, mitochondrial inner membrane protein TMEM11 and with HSPA9. The MICOS and SAM complexes together with DNAJC11 are part of a large protein complex spanning both membranes termed the mitochondrial intermembrane space bridging (MIB) complex. Interacts with ARMC1. In terms of processing, ubiquitinated by PRKN during mitophagy, leading to its degradation and enhancement of mitophagy. Deubiquitinated by USP30. In terms of tissue distribution, ubiquitous. Higher levels are seen in the kidney as compared to other tissues.

It is found in the mitochondrion outer membrane. Involved in transport of proteins into the mitochondrion. Essential for embryonic development. The chain is Metaxin-1 (Mtx1) from Mus musculus (Mouse).